A 61-amino-acid polypeptide reads, in one-letter code: Photosystem II reaction center protein K (61 aa).

Positions 1–24 are excised as a propeptide; the sequence is MPNIFSLICICLNSALQPSGFFFA. Residues 36–56 traverse the membrane as a helical segment; sequence IVDFMPVIPVLFFLLAFVWQA.

Belongs to the PsbK family. In terms of assembly, PSII is composed of 1 copy each of membrane proteins PsbA, PsbB, PsbC, PsbD, PsbE, PsbF, PsbH, PsbI, PsbJ, PsbK, PsbL, PsbM, PsbT, PsbX, PsbY, PsbZ, Psb30/Ycf12, at least 3 peripheral proteins of the oxygen-evolving complex and a large number of cofactors. It forms dimeric complexes.

It is found in the plastid. The protein localises to the chloroplast thylakoid membrane. Its function is as follows. One of the components of the core complex of photosystem II (PSII). PSII is a light-driven water:plastoquinone oxidoreductase that uses light energy to abstract electrons from H(2)O, generating O(2) and a proton gradient subsequently used for ATP formation. It consists of a core antenna complex that captures photons, and an electron transfer chain that converts photonic excitation into a charge separation. The protein is Photosystem II reaction center protein K of Nymphaea alba (White water-lily).